A 464-amino-acid chain; its full sequence is ATP synthase subunit beta (464 aa).

An ATP-binding site is contributed by Gly152–Thr159.

This sequence belongs to the ATPase alpha/beta chains family. F-type ATPases have 2 components, CF(1) - the catalytic core - and CF(0) - the membrane proton channel. CF(1) has five subunits: alpha(3), beta(3), gamma(1), delta(1), epsilon(1). CF(0) has three main subunits: a(1), b(2) and c(9-12). The alpha and beta chains form an alternating ring which encloses part of the gamma chain. CF(1) is attached to CF(0) by a central stalk formed by the gamma and epsilon chains, while a peripheral stalk is formed by the delta and b chains.

Its subcellular location is the cell membrane. It carries out the reaction ATP + H2O + 4 H(+)(in) = ADP + phosphate + 5 H(+)(out). Produces ATP from ADP in the presence of a proton gradient across the membrane. The catalytic sites are hosted primarily by the beta subunits. In Ureaplasma urealyticum serovar 10 (strain ATCC 33699 / Western), this protein is ATP synthase subunit beta.